Reading from the N-terminus, the 551-residue chain is Tetrachloroethene reductive dehalogenase (551 aa).

Residues 1–39 (MGEINRRNFLKASMLGAAAAAVASASVVKGVVSPLVADA) constitute a signal peptide (tat-type signal). One can recognise a 4Fe-4S ferredoxin-type 1 domain in the interval 411–440 (PRKFGVREFCRLCKKCADACPAQAISHEKD). Residues cysteine 420, cysteine 423, cysteine 426, cysteine 430, cysteine 467, cysteine 478, cysteine 481, and cysteine 485 each coordinate [4Fe-4S] cluster. Positions 478–496 (CSNCVAVCSWNKVETWNHD) constitute a 4Fe-4S ferredoxin-type 2 domain.

It belongs to the PceA family. [4Fe-4S] cluster serves as cofactor. The cofactor is corrinoid. In terms of processing, predicted to be exported by the Tat system. The position of the signal peptide cleavage has been experimentally proven.

The protein resides in the cell membrane. The catalysed reaction is trichloroethene + chloride + A + H(+) = tetrachloroethene + AH2. It catalyses the reaction trichloroethene + AH2 = (Z)-1,2-dichloroethene + chloride + A + H(+). Functionally, catalyzes the reductive dechlorination of tetrachloroethene (PCE) to trichloroethene (TCE) and of trichloroethene to cis-1,2-dichloroethene (DCE). Reduced methyl viologen can act as the artificial electron donor. This is Tetrachloroethene reductive dehalogenase from Desulfitobacterium hafniense (Desulfitobacterium frappieri).